Here is an 89-residue protein sequence, read N- to C-terminus: Large ribosomal subunit protein bL28 (89 aa).

The protein belongs to the bacterial ribosomal protein bL28 family.

In Chlamydia trachomatis serovar A (strain ATCC VR-571B / DSM 19440 / HAR-13), this protein is Large ribosomal subunit protein bL28.